Here is a 678-residue protein sequence, read N- to C-terminus: RNA helicase NPH-II (678 aa).

Positions 175 to 351 (FTSWARRVPV…EFFAESVFVH (177 aa)) constitute a Helicase ATP-binding domain. Position 188–195 (188–195 (GDTGVGKT)) interacts with ATP. The DEXH box signature appears at 300–303 (DEVH). Positions 371-546 (PLNRFMYIEE…VFDLQLPEDL (176 aa)) constitute a Helicase C-terminal domain.

It belongs to the DEAD box helicase family. DEAH subfamily. In terms of assembly, monomer.

The protein localises to the virion. It catalyses the reaction ATP + H2O = ADP + phosphate + H(+). NTP-dependent helicase that catalyzes unidirectional unwinding of 3'tailed duplex RNAs and plays an important role during transcription of early mRNAs, presumably by preventing R-loop formation behind the elongating RNA polymerase. Might also play a role in the export of newly synthesized mRNA chains out of the core into the cytoplasm. Required for replication and propagation of viral particles. The polypeptide is RNA helicase NPH-II (OPG084) (Oryctolagus cuniculus (Rabbit)).